A 307-amino-acid chain; its full sequence is UDP-3-O-acyl-N-acetylglucosamine deacetylase (307 aa).

Zn(2+) is bound by residues histidine 78, histidine 241, and aspartate 245. Histidine 268 functions as the Proton donor in the catalytic mechanism.

It belongs to the LpxC family. Zn(2+) is required as a cofactor.

It carries out the reaction a UDP-3-O-[(3R)-3-hydroxyacyl]-N-acetyl-alpha-D-glucosamine + H2O = a UDP-3-O-[(3R)-3-hydroxyacyl]-alpha-D-glucosamine + acetate. It participates in glycolipid biosynthesis; lipid IV(A) biosynthesis; lipid IV(A) from (3R)-3-hydroxytetradecanoyl-[acyl-carrier-protein] and UDP-N-acetyl-alpha-D-glucosamine: step 2/6. Its function is as follows. Catalyzes the hydrolysis of UDP-3-O-myristoyl-N-acetylglucosamine to form UDP-3-O-myristoylglucosamine and acetate, the committed step in lipid A biosynthesis. The polypeptide is UDP-3-O-acyl-N-acetylglucosamine deacetylase (Polaromonas sp. (strain JS666 / ATCC BAA-500)).